The chain runs to 64 residues: Beta-insect excitatory toxin OdTx12 (64 aa).

An LCN-type CS-alpha/beta domain is found at glutamine 1 to aspartate 59. 4 cysteine pairs are disulfide-bonded: cysteine 10-cysteine 31, cysteine 16-cysteine 36, cysteine 20-cysteine 38, and cysteine 32-cysteine 58.

The protein belongs to the long (4 C-C) scorpion toxin superfamily. Sodium channel inhibitor family. Beta subfamily. In terms of tissue distribution, expressed by the venom gland.

It is found in the secreted. Excitatory insect beta-toxins induce a spastic paralysis. They bind voltage-independently at site-4 of sodium channels (Nav) and shift the voltage of activation toward more negative potentials thereby affecting sodium channel activation and promoting spontaneous and repetitive firing. In vivo, this recombinant protein is lethal to Locusta migratoria larvae after injection, but has no significant effect when orally administered. Is not toxic to mice after intracerebroventricular injection. This chain is Beta-insect excitatory toxin OdTx12, found in Odontobuthus doriae (Yellow Iranian scorpion).